A 415-amino-acid polypeptide reads, in one-letter code: Phosphoglycerate kinase (415 aa).

Substrate contacts are provided by residues 27–29 (DIN), Arg-44, 67–70 (HQGR), Arg-124, and Arg-164. ATP contacts are provided by residues Glu-336 and 362 to 365 (GGHM).

This sequence belongs to the phosphoglycerate kinase family. In terms of assembly, monomer.

The protein localises to the cytoplasm. The catalysed reaction is (2R)-3-phosphoglycerate + ATP = (2R)-3-phospho-glyceroyl phosphate + ADP. It functions in the pathway carbohydrate degradation; glycolysis; pyruvate from D-glyceraldehyde 3-phosphate: step 2/5. In Sulfurisphaera tokodaii (strain DSM 16993 / JCM 10545 / NBRC 100140 / 7) (Sulfolobus tokodaii), this protein is Phosphoglycerate kinase.